Consider the following 187-residue polypeptide: Transcription antitermination protein NusB (187 aa).

The segment at 135–187 (APAPESVAEEADEESSDSDAAASDPTDEGDVSDSSGASDEPAAPSAEIQPTVD) is disordered. Over residues 141–151 (VAEEADEESSD) the composition is skewed to acidic residues.

This sequence belongs to the NusB family.

Involved in transcription antitermination. Required for transcription of ribosomal RNA (rRNA) genes. Binds specifically to the boxA antiterminator sequence of the ribosomal RNA (rrn) operons. This Bifidobacterium longum subsp. infantis (strain ATCC 15697 / DSM 20088 / JCM 1222 / NCTC 11817 / S12) protein is Transcription antitermination protein NusB.